The sequence spans 417 residues: Serine hydroxymethyltransferase (417 aa).

(6S)-5,6,7,8-tetrahydrofolate-binding positions include leucine 122 and 126–128 (GHL). N6-(pyridoxal phosphate)lysine is present on lysine 231.

It belongs to the SHMT family. Homodimer. Pyridoxal 5'-phosphate serves as cofactor.

The protein resides in the cytoplasm. It carries out the reaction (6R)-5,10-methylene-5,6,7,8-tetrahydrofolate + glycine + H2O = (6S)-5,6,7,8-tetrahydrofolate + L-serine. It functions in the pathway one-carbon metabolism; tetrahydrofolate interconversion. It participates in amino-acid biosynthesis; glycine biosynthesis; glycine from L-serine: step 1/1. Functionally, catalyzes the reversible interconversion of serine and glycine with tetrahydrofolate (THF) serving as the one-carbon carrier. This reaction serves as the major source of one-carbon groups required for the biosynthesis of purines, thymidylate, methionine, and other important biomolecules. Also exhibits THF-independent aldolase activity toward beta-hydroxyamino acids, producing glycine and aldehydes, via a retro-aldol mechanism. In Caldicellulosiruptor saccharolyticus (strain ATCC 43494 / DSM 8903 / Tp8T 6331), this protein is Serine hydroxymethyltransferase.